A 1399-amino-acid chain; its full sequence is DNA-directed RNA polymerase subunit beta' (1399 aa).

Zn(2+)-binding residues include Cys-70, Cys-72, Cys-85, and Cys-88. 3 residues coordinate Mg(2+): Asp-460, Asp-462, and Asp-464. The Zn(2+) site is built by Cys-814, Cys-888, Cys-895, and Cys-898.

The protein belongs to the RNA polymerase beta' chain family. The RNAP catalytic core consists of 2 alpha, 1 beta, 1 beta' and 1 omega subunit. When a sigma factor is associated with the core the holoenzyme is formed, which can initiate transcription. The cofactor is Mg(2+). Zn(2+) is required as a cofactor.

The enzyme catalyses RNA(n) + a ribonucleoside 5'-triphosphate = RNA(n+1) + diphosphate. In terms of biological role, DNA-dependent RNA polymerase catalyzes the transcription of DNA into RNA using the four ribonucleoside triphosphates as substrates. This chain is DNA-directed RNA polymerase subunit beta', found in Pseudomonas fluorescens (strain SBW25).